The sequence spans 455 residues: Fez family zinc finger protein 2 (455 aa).

The segment at 1–22 (MASSASLETMVPPACPRAGASP) is disordered. Residues 27–42 (TLAFSIERIMAKTSEP) carry the Engrailed homology 1 repressor motif. C2H2-type zinc fingers lie at residues 272–294 (FTCEVCGKVFNAHYNLTRHMPVH), 300–322 (FVCKVCGKGFRQASTLCRHKIIH), 328–350 (HKCNQCGKAFNRSSTLNTHIRIH), 356–378 (FVCEFCGKGFHQKGNYKNHKLTH), 384–406 (YKCTICNKAFHQVYNLTFHMHTH), and 412–435 (FTCATCGKGFCRNFDLKKHVRKLH).

Belongs to the krueppel C2H2-type zinc-finger protein family. Highly expressed in neocortical layer V, moderately expressed in layer VI. Expressed in subcortically projecting neurons.

The protein localises to the nucleus. Its function is as follows. Transcription repressor. Required for the specification of corticospinal motor neurons and other subcerebral projection neurons. May play a role in layer and neuronal subtype-specific patterning of subcortical projections and axonal fasciculation. Controls the development of dendritic arborization and spines of large layer V pyramidal neurons. Plays a role in rostro-caudal patterning of the diencephalon and in prethalamic formation. The sequence is that of Fez family zinc finger protein 2 (Fezf2) from Mus musculus (Mouse).